Consider the following 518-residue polypeptide: Bifunctional enzyme NanE/NanK (518 aa).

Positions 1–234 are manNAc-6-P epimerase; it reads MCRVQGMIEE…DAVESAAKPS (234 aa). The tract at residues 235–518 is manNAc kinase; sequence SPVLAFDIGG…VADLAATYFS (284 aa). Residues 239–246 and 365–372 contribute to the ATP site; these read AFDIGGTK and GIGGGIVL.

It in the N-terminal section; belongs to the NanE family. The protein in the C-terminal section; belongs to the ROK (NagC/XylR) family. NanK subfamily.

The catalysed reaction is an N-acyl-D-glucosamine 6-phosphate = an N-acyl-D-mannosamine 6-phosphate. The enzyme catalyses an N-acyl-D-mannosamine + ATP = an N-acyl-D-mannosamine 6-phosphate + ADP + H(+). It functions in the pathway amino-sugar metabolism; N-acetylneuraminate degradation; D-fructose 6-phosphate from N-acetylneuraminate: step 2/5. The protein operates within amino-sugar metabolism; N-acetylneuraminate degradation; D-fructose 6-phosphate from N-acetylneuraminate: step 3/5. Functionally, converts N-acetylmannosamine-6-phosphate (ManNAc-6-P) to N-acetylglucosamine-6-phosphate (GlcNAc-6-P). In terms of biological role, catalyzes the phosphorylation of N-acetylmannosamine (ManNAc) to ManNAc-6-P. The chain is Bifunctional enzyme NanE/NanK (nanEK) from Brucella melitensis biotype 1 (strain ATCC 23456 / CCUG 17765 / NCTC 10094 / 16M).